The sequence spans 278 residues: E3 ubiquitin-protein ligase CHIP (278 aa).

TPR repeat units lie at residues 10–43 (AERLKEDGNNCFKKERFGAAIDAYTEAIALSPNV), 45–77 (AYWTNRALCHMKRKDWTKVEEDCRKAIQLVHNS), and 78–111 (VKAHYMLGLALLQKKEFTNGVKELQRALDLGRCS). A coiled-coil region spans residues 143-194 (ELNSLKETCEAALNQQRALDMSRTEESSDEAYTAHTERLKALERVFKKAAEE). The U-box domain occupies 199–273 (EVPDYLCCNI…AAYLEKHVWA (75 aa)).

In terms of assembly, interacts with HSC70-4, PP2AA1, PP2AA3 and PP2A5, as well as with UBC8, UBC9 and UBC10. Also interacts with the chloroplastic proteolytic subunits ClpP4, FtsH1 and FtsH2.

It carries out the reaction S-ubiquitinyl-[E2 ubiquitin-conjugating enzyme]-L-cysteine + [acceptor protein]-L-lysine = [E2 ubiquitin-conjugating enzyme]-L-cysteine + N(6)-ubiquitinyl-[acceptor protein]-L-lysine.. It functions in the pathway protein modification; protein ubiquitination. Its function is as follows. Has E3 ubiquitin-protein ligase activity and may target misfolded substrates towards proteasomal degradation. Regulates the activity of some serine/threonine-protein phosphatases by E3 ubiquitin-protein ligase activity. Required for responses to biotic and abiotic stresses such as auxin, abscisic acid (ABA), low and high temperature and darkness, probably through the activation of serine/threonine-protein phosphatase and the subsequent modification of the plasma membrane composition. Regulates the chloroplastic Clp proteolytic activity in response to stresses. Ubiquitylates FtsH1, a component of the chloroplast FtsH protease, and affects protein degradation in chloroplasts. Mediates plastid precursor degradation to prevent cytosolic precursor accumulation, together with the molecular chaperone HSC70-4. Mediates ubiquitination of transit peptides and thereby led to their degradation through the ubiquitin-proteasome system. The chain is E3 ubiquitin-protein ligase CHIP from Arabidopsis thaliana (Mouse-ear cress).